Here is a 248-residue protein sequence, read N- to C-terminus: FCS-Like Zinc finger 14 (248 aa).

Over residues 85 to 94 (VCRSEPNQPG) the composition is skewed to polar residues. Residues 85–108 (VCRSEPNQPGRSDPVQFMSHGGST) are disordered. An FLZ-type zinc finger spans residues 181 to 224 (GFLNSCYLCRKKLHGQDIFIYRGEKAFCSTECRSSHIANDERKE).

The protein belongs to the FLZ family. Interacts with KIN10 and KIN11 via its FLZ-type zinc finger domain. Interacts with KINB1, KINB2 and KINB3 via its N-terminal part.

Its subcellular location is the cytoplasm. The protein resides in the nucleus. Functionally, may act as an adapter to facilitate the interaction of SnRK1 complex with effector proteins, conferring tissue- and stimulus-type specific differences in the SnRK1 regulation pathway. This chain is FCS-Like Zinc finger 14, found in Arabidopsis thaliana (Mouse-ear cress).